A 386-amino-acid polypeptide reads, in one-letter code: S-adenosylmethionine synthase (386 aa).

His-16 provides a ligand contact to ATP. Asp-18 contacts Mg(2+). Glu-44 contacts K(+). 2 residues coordinate L-methionine: Glu-57 and Gln-100. The flexible loop stretch occupies residues 100-110 (QSGDIAMGVDE). Residues 165–167 (DAK), Asp-240, 246–247 (RK), Ala-263, and Lys-267 contribute to the ATP site. Asp-240 is a binding site for L-methionine. Lys-271 contributes to the L-methionine binding site.

Belongs to the AdoMet synthase family. As to quaternary structure, homotetramer; dimer of dimers. Mg(2+) serves as cofactor. The cofactor is K(+).

Its subcellular location is the cytoplasm. It carries out the reaction L-methionine + ATP + H2O = S-adenosyl-L-methionine + phosphate + diphosphate. It participates in amino-acid biosynthesis; S-adenosyl-L-methionine biosynthesis; S-adenosyl-L-methionine from L-methionine: step 1/1. Catalyzes the formation of S-adenosylmethionine (AdoMet) from methionine and ATP. The overall synthetic reaction is composed of two sequential steps, AdoMet formation and the subsequent tripolyphosphate hydrolysis which occurs prior to release of AdoMet from the enzyme. The chain is S-adenosylmethionine synthase from Hahella chejuensis (strain KCTC 2396).